Consider the following 125-residue polypeptide: MKHYEVLFILKPTLTEEEVNTKLEFVKEVLTKNSAEIETVVPMGTRKLAYKIKKYERGTYFVIYFKAPTNLIAELERVLRITEEVIRFLIVKYENKKEIAAWEKLSHGIKQSKKEIKPLDAPEIQ.

The protein belongs to the bacterial ribosomal protein bS6 family.

Its function is as follows. Binds together with bS18 to 16S ribosomal RNA. The chain is Small ribosomal subunit protein bS6 (rpsF) from Campylobacter jejuni subsp. jejuni serotype O:2 (strain ATCC 700819 / NCTC 11168).